Reading from the N-terminus, the 93-residue chain is Red pigment-concentrating hormone (93 aa).

Positions 1 to 21 (MVRAVVATLLVVLVVASCVSA) are cleaved as a signal peptide. At Q22 the chain carries Pyrrolidone carboxylic acid. The residue at position 29 (W29) is a Tryptophan amide. Positions 33–93 (AAAGGEGTGM…VQCQDEEYLG (61 aa)) are excised as a propeptide. The segment at 34–56 (AAGGEGTGMHPPAGAVVPPPSSL) is disordered.

Belongs to the AKH/HRTH/RPCH family. In terms of tissue distribution, strongly expressed in the eyestalk and weakly in brain. Not expressed in other tissues tested.

The protein localises to the secreted. In terms of biological role, this hormone adapts the animal to light backgrounds by stimulating concentration of the pigment of its red body-chromatophores. The sequence is that of Red pigment-concentrating hormone from Penaeus monodon (Giant tiger prawn).